Here is a 545-residue protein sequence, read N- to C-terminus: Glucose-6-phosphate isomerase (545 aa).

E351 functions as the Proton donor in the catalytic mechanism. Residues H382 and K510 contribute to the active site.

The protein belongs to the GPI family.

The protein resides in the cytoplasm. The catalysed reaction is alpha-D-glucose 6-phosphate = beta-D-fructose 6-phosphate. Its pathway is carbohydrate biosynthesis; gluconeogenesis. It participates in carbohydrate degradation; glycolysis; D-glyceraldehyde 3-phosphate and glycerone phosphate from D-glucose: step 2/4. Catalyzes the reversible isomerization of glucose-6-phosphate to fructose-6-phosphate. This Helicobacter pylori (strain Shi470) protein is Glucose-6-phosphate isomerase.